The primary structure comprises 249 residues: Probable transcriptional regulatory protein ZMO0153 (249 aa).

The protein belongs to the TACO1 family.

It localises to the cytoplasm. The sequence is that of Probable transcriptional regulatory protein ZMO0153 from Zymomonas mobilis subsp. mobilis (strain ATCC 31821 / ZM4 / CP4).